Consider the following 306-residue polypeptide: Mitochondrial substrate carrier family protein M (306 aa).

The Mitochondrial intermembrane segment spans residues 1–10 (MRYILNNNVE). Solcar repeat units follow at residues 5 to 98 (LNNN…YKNI), 108 to 195 (LNTF…IKFY), and 207 to 299 (LNAS…IKKS). The chain crosses the membrane as a helical span at residues 11–31 (GTSALLGSTVATAFLQPFDFL). The Mitochondrial matrix portion of the chain corresponds to 32-72 (KIRLQGSGFASGGDLNKFKRVGVIDTCKNVLKNEGIKQFWR). The chain crosses the membrane as a helical span at residues 73-89 (GSSPTIVASGIAWGTYM). Over 90-113 (HFYEAYKNILKSKYNVTQLNTFDH) the chain is Mitochondrial intermembrane. Residues 114–134 (FICAVGASATQVFITNPIFLI) traverse the membrane as a helical segment. The Mitochondrial matrix segment spans residues 135 to 163 (KTRMQLQTPGSANYYTGIFDGIKKTVKVE). Residues 164-184 (GFKGLYKGVIPSLWLTFHGGI) form a helical membrane-spanning segment. The Mitochondrial intermembrane segment spans residues 185-211 (QMSSYEHIKFYFSSNSGKSLDSLNASE). The helical transmembrane segment at 212–232 (IFIASSISKFLASTILYPFQV) threads the bilayer. Topologically, residues 233–278 (VKTRLQDERNIPNQNNVRVYNGTKDVIFKILKNEGIIGFYRGLVPN) are mitochondrial matrix. Residues 279–296 (TLKVIPNTSITLLLYEEI) form a helical membrane-spanning segment. Residues 297–306 (KKSFNYIINE) are Mitochondrial intermembrane-facing.

It belongs to the mitochondrial carrier (TC 2.A.29) family.

It localises to the mitochondrion inner membrane. In terms of biological role, mitochondrial solute carriers shuttle metabolites, nucleotides, and cofactors through the mitochondrial inner membrane. Transports folate across the inner membranes of mitochondria. The protein is Mitochondrial substrate carrier family protein M (mcfM) of Dictyostelium discoideum (Social amoeba).